A 393-amino-acid chain; its full sequence is S-adenosylmethionine synthase 2 (393 aa).

A Mg(2+)-binding site is contributed by Glu-9. Residue His-15 coordinates ATP. Glu-43 is a K(+) binding site. 2 residues coordinate L-methionine: Glu-56 and Gln-99. ATP contacts are provided by residues 167 to 169, 235 to 238, Asp-246, 252 to 253, Ala-269, Lys-273, and Lys-277; these read DGK, SGRF, and RK. Asp-246 provides a ligand contact to L-methionine. Lys-277 serves as a coordination point for L-methionine.

Belongs to the AdoMet synthase family. As to quaternary structure, homotetramer. Mn(2+) is required as a cofactor. Mg(2+) serves as cofactor. The cofactor is Co(2+). Requires K(+) as cofactor.

It is found in the cytoplasm. It carries out the reaction L-methionine + ATP + H2O = S-adenosyl-L-methionine + phosphate + diphosphate. It functions in the pathway amino-acid biosynthesis; S-adenosyl-L-methionine biosynthesis; S-adenosyl-L-methionine from L-methionine: step 1/1. Functionally, catalyzes the formation of S-adenosylmethionine from methionine and ATP. The reaction comprises two steps that are both catalyzed by the same enzyme: formation of S-adenosylmethionine (AdoMet) and triphosphate, and subsequent hydrolysis of the triphosphate. The sequence is that of S-adenosylmethionine synthase 2 (METK2) from Vitis vinifera (Grape).